A 256-amino-acid polypeptide reads, in one-letter code: Ribosomal RNA small subunit methyltransferase A (256 aa).

Asparagine 12, leucine 14, glycine 39, glutamate 60, aspartate 85, and asparagine 103 together coordinate S-adenosyl-L-methionine.

The protein belongs to the class I-like SAM-binding methyltransferase superfamily. rRNA adenine N(6)-methyltransferase family. RsmA subfamily.

The protein localises to the cytoplasm. The enzyme catalyses adenosine(1518)/adenosine(1519) in 16S rRNA + 4 S-adenosyl-L-methionine = N(6)-dimethyladenosine(1518)/N(6)-dimethyladenosine(1519) in 16S rRNA + 4 S-adenosyl-L-homocysteine + 4 H(+). Its function is as follows. Specifically dimethylates two adjacent adenosines (A1518 and A1519) in the loop of a conserved hairpin near the 3'-end of 16S rRNA in the 30S particle. May play a critical role in biogenesis of 30S subunits. The protein is Ribosomal RNA small subunit methyltransferase A of Legionella pneumophila (strain Lens).